The following is a 66-amino-acid chain: Large ribosomal subunit protein bL33c (66 aa).

Belongs to the bacterial ribosomal protein bL33 family.

The protein resides in the plastid. It localises to the chloroplast. The chain is Large ribosomal subunit protein bL33c from Liriodendron tulipifera (Tuliptree).